Consider the following 777-residue polypeptide: Lon protease (777 aa).

A Lon N-terminal domain is found at isoleucine 11 to isoleucine 204. Residue glycine 356 to threonine 363 participates in ATP binding. Positions threonine 592–lysine 773 constitute a Lon proteolytic domain. Catalysis depends on residues serine 679 and lysine 722.

Belongs to the peptidase S16 family. Homohexamer. Organized in a ring with a central cavity.

It localises to the cytoplasm. The enzyme catalyses Hydrolysis of proteins in presence of ATP.. Its function is as follows. ATP-dependent serine protease that mediates the selective degradation of mutant and abnormal proteins as well as certain short-lived regulatory proteins. Required for cellular homeostasis and for survival from DNA damage and developmental changes induced by stress. Degrades polypeptides processively to yield small peptide fragments that are 5 to 10 amino acids long. Binds to DNA in a double-stranded, site-specific manner. In Buchnera aphidicola subsp. Acyrthosiphon pisum (strain APS) (Acyrthosiphon pisum symbiotic bacterium), this protein is Lon protease.